The sequence spans 264 residues: Glucosamine-6-phosphate deaminase (264 aa).

Residue aspartate 67 is the Proton acceptor; for enolization step of the active site. Residue asparagine 136 is the For ring-opening step of the active site. Catalysis depends on histidine 138, which acts as the Proton acceptor; for ring-opening step. Residue glutamate 143 is the For ring-opening step of the active site.

The protein belongs to the glucosamine/galactosamine-6-phosphate isomerase family. NagB subfamily. Homohexamer.

It catalyses the reaction alpha-D-glucosamine 6-phosphate + H2O = beta-D-fructose 6-phosphate + NH4(+). Its pathway is amino-sugar metabolism; N-acetylneuraminate degradation; D-fructose 6-phosphate from N-acetylneuraminate: step 5/5. Functionally, catalyzes the reversible isomerization-deamination of glucosamine 6-phosphate (GlcN6P) to form fructose 6-phosphate (Fru6P) and ammonium ion. The chain is Glucosamine-6-phosphate deaminase from Shewanella woodyi (strain ATCC 51908 / MS32).